The primary structure comprises 231 residues: NADH-ubiquinone oxidoreductase chain 4 (231 aa).

A run of 6 helical transmembrane segments spans residues 1 to 21, 34 to 54, 61 to 80, 84 to 106, 128 to 148, and 169 to 189; these read PIAGSMVLAAILLKLGGYGII, LFLPFIVLALWGAILANLTCL, SLIAYSSISHMGLVVAAIII, WGLSGAMALMIAHGFTSSALFCL, ILPMATTWWLLANLMNIATPP, and TIILLGLSMLITASYSLHMFL.

Belongs to the complex I subunit 4 family.

It is found in the mitochondrion membrane. The enzyme catalyses a ubiquinone + NADH + 5 H(+)(in) = a ubiquinol + NAD(+) + 4 H(+)(out). Functionally, core subunit of the mitochondrial membrane respiratory chain NADH dehydrogenase (Complex I) that is believed to belong to the minimal assembly required for catalysis. Complex I functions in the transfer of electrons from NADH to the respiratory chain. The immediate electron acceptor for the enzyme is believed to be ubiquinone. The chain is NADH-ubiquinone oxidoreductase chain 4 (MT-ND4) from Metlapilcoatlus nummifer (Mexican jumping pitviper).